A 333-amino-acid chain; its full sequence is Cathepsin M (333 aa).

The first 15 residues, 1–15, serve as a signal peptide directing secretion; that stretch reads MTSAIFLAMLCLGMA. The propeptide at 16-113 is activation peptide; the sequence is LPSPAPDPIL…KSVQKRLSVN (98 aa). Intrachain disulfides connect cysteine 135–cysteine 178 and cysteine 169–cysteine 211. Cysteine 138 is an active-site residue. Residues asparagine 217, asparagine 221, and asparagine 268 are each glycosylated (N-linked (GlcNAc...) asparagine). A disulfide bond links cysteine 269 and cysteine 322. Catalysis depends on residues histidine 276 and asparagine 300.

The protein belongs to the peptidase C1 family. Placenta.

The protein localises to the lysosome. The protein is Cathepsin M (Ctsm) of Mus musculus (Mouse).